The sequence spans 373 residues: Inhibitor of nuclear factor kappa-B kinase-interacting protein (373 aa).

Over residues 1 to 11 (MSEVKSRKKPG) the composition is skewed to basic residues. The segment at 1 to 38 (MSEVKSRKKPGPKVAAPEPEKRSDGRKNPEARGGAGWA) is disordered. Positions 18–30 (EPEKRSDGRKNPE) are enriched in basic and acidic residues. Residues 43–59 (GLSLLSLATSLGLAWLV) form a helical membrane-spanning segment. Coiled-coil stretches lie at residues 64–257 (EKFA…DKLS) and 290–325 (TERK…LEGI). N151 carries an N-linked (GlcNAc...) asparagine glycan.

Post-translationally, N-glycosylated at Asn-151.

It is found in the endoplasmic reticulum membrane. Target of p53/TP53 with pro-apoptotic function. The protein is Inhibitor of nuclear factor kappa-B kinase-interacting protein (Ikbip) of Rattus norvegicus (Rat).